Reading from the N-terminus, the 369-residue chain is Protein VP6 (369 aa).

Disordered regions lie at residues 17-169 (KREL…LQGR) and 184-208 (LDRI…GGDR). A compositionally biased stretch (basic and acidic residues) spans 29–68 (LREKGSTEAKSKLKEDGEKKNKSEKEENKIHDDRRVESQK). Residues 92-111 (TGGGDGSAGARTGIGGGGVG) show a composition bias toward gly residues. 2 stretches are compositionally biased toward basic and acidic residues: residues 137-148 (TGADRVANDDAT) and 196-208 (TEGE…GGDR).

This sequence belongs to the orbivirus VP6 family.

The protein resides in the virion. This chain is Protein VP6 (Segment-9), found in African horse sickness virus (AHSV).